We begin with the raw amino-acid sequence, 214 residues long: ATP phosphoribosyltransferase (214 aa).

The protein belongs to the ATP phosphoribosyltransferase family. Short subfamily. As to quaternary structure, heteromultimer composed of HisG and HisZ subunits.

It localises to the cytoplasm. It carries out the reaction 1-(5-phospho-beta-D-ribosyl)-ATP + diphosphate = 5-phospho-alpha-D-ribose 1-diphosphate + ATP. Its pathway is amino-acid biosynthesis; L-histidine biosynthesis; L-histidine from 5-phospho-alpha-D-ribose 1-diphosphate: step 1/9. Its function is as follows. Catalyzes the condensation of ATP and 5-phosphoribose 1-diphosphate to form N'-(5'-phosphoribosyl)-ATP (PR-ATP). Has a crucial role in the pathway because the rate of histidine biosynthesis seems to be controlled primarily by regulation of HisG enzymatic activity. The sequence is that of ATP phosphoribosyltransferase from Marinomonas sp. (strain MWYL1).